We begin with the raw amino-acid sequence, 336 residues long: D-alanine--D-alanine ligase (336 aa).

Residues 124-330 (KMWFSALGVP…FTEYLIDVIG (207 aa)) enclose the ATP-grasp domain. 154–209 (AFDNWGSVFVKAASQGSSVGCYKVDVKANIANVLKDAFSYAPYVVVEQTIHARELE) contacts ATP. Positions 284, 297, and 299 each coordinate Mg(2+).

The protein belongs to the D-alanine--D-alanine ligase family. Mg(2+) is required as a cofactor. Mn(2+) serves as cofactor.

The protein localises to the cytoplasm. It carries out the reaction 2 D-alanine + ATP = D-alanyl-D-alanine + ADP + phosphate + H(+). It functions in the pathway cell wall biogenesis; peptidoglycan biosynthesis. In terms of biological role, cell wall formation. This is D-alanine--D-alanine ligase from Shewanella frigidimarina (strain NCIMB 400).